Here is a 94-residue protein sequence, read N- to C-terminus: Large ribosomal subunit protein bL25 (94 aa).

This sequence belongs to the bacterial ribosomal protein bL25 family. Part of the 50S ribosomal subunit; part of the 5S rRNA/L5/L18/L25 subcomplex. Contacts the 5S rRNA. Binds to the 5S rRNA independently of L5 and L18.

This is one of the proteins that binds to the 5S RNA in the ribosome where it forms part of the central protuberance. The polypeptide is Large ribosomal subunit protein bL25 (Escherichia coli O157:H7).